The chain runs to 382 residues: MLVVRADYKKYPIPVLEKMRIDEDEFYKKYDACVVVQTCNRIEAYFDTEVNSDLNCILNDFSGFDILKGKNATFHFLKVSCGMDSMILGENQILGQIKTSFQKARELKKTSRYLDSVFLKAIHVGQRARTETKINEGSVSIGSAAVELAEKNFGLANKNVLLIGAGEIGTLVAKALMEKHIKAVIVANRTYERAETLAKELKGMAVHFDKLKEAINFSDVIICATSSPHYILKKEDLIDVGNKIIIDIANPRDVDDAVREFENINLYTIDDLRNISDKNLQKRIEEVPAVEKIIDEEYDVLMKQIEKINVEEVLKDFNNYIEEIRTKELEKAIKLSKTKNPEEIMENFSKAFAKRITHDFVSYSINTSKEDLMNSAWWKNGK.

Substrate-binding positions include 38-41, Ser85, 90-92, and Gln96; these read TCNR and ENQ. Cys39 functions as the Nucleophile in the catalytic mechanism. 164–169 contacts NADP(+); it reads GAGEIG.

It belongs to the glutamyl-tRNA reductase family. As to quaternary structure, homodimer.

The enzyme catalyses (S)-4-amino-5-oxopentanoate + tRNA(Glu) + NADP(+) = L-glutamyl-tRNA(Glu) + NADPH + H(+). It participates in porphyrin-containing compound metabolism; protoporphyrin-IX biosynthesis; 5-aminolevulinate from L-glutamyl-tRNA(Glu): step 1/2. Its function is as follows. Catalyzes the NADPH-dependent reduction of glutamyl-tRNA(Glu) to glutamate 1-semialdehyde (GSA). The polypeptide is Glutamyl-tRNA reductase (Methanococcus maripaludis (strain DSM 14266 / JCM 13030 / NBRC 101832 / S2 / LL)).